Consider the following 313-residue polypeptide: Putative serine protease 29 (313 aa).

Residues 1–22 (MPTTPDPGSEPPARTPRPPPLT) are compositionally biased toward pro residues. Residues 1 to 27 (MPTTPDPGSEPPARTPRPPPLTPGLSP) form a disordered region. The 243-residue stretch at 68–310 (IVGGHNAPPG…YVPWILQQVG (243 aa)) folds into the Peptidase S1 domain. A disulfide bridge links Cys-99 with Cys-115. Residue His-114 is the Charge relay system of the active site. Asn-143 carries an N-linked (GlcNAc...) asparagine glycan. The active-site Charge relay system is Asp-161. 3 disulfides stabilise this stretch: Cys-193-Cys-268, Cys-226-Cys-249, and Cys-258-Cys-286. Catalysis depends on Ser-262, which acts as the Charge relay system.

Belongs to the peptidase S1 family.

The protein localises to the secreted. The chain is Putative serine protease 29 (PRSS29P) from Homo sapiens (Human).